The chain runs to 274 residues: 3-methyl-2-oxobutanoate hydroxymethyltransferase (274 aa).

Residues D49 and D88 each coordinate Mg(2+). 3-methyl-2-oxobutanoate contacts are provided by residues 49-50, D88, and K118; that span reads DS. Position 120 (E120) interacts with Mg(2+). The active-site Proton acceptor is E187.

The protein belongs to the PanB family. As to quaternary structure, homodecamer; pentamer of dimers. It depends on Mg(2+) as a cofactor.

It localises to the cytoplasm. The catalysed reaction is 3-methyl-2-oxobutanoate + (6R)-5,10-methylene-5,6,7,8-tetrahydrofolate + H2O = 2-dehydropantoate + (6S)-5,6,7,8-tetrahydrofolate. Its pathway is cofactor biosynthesis; (R)-pantothenate biosynthesis; (R)-pantoate from 3-methyl-2-oxobutanoate: step 1/2. In terms of biological role, catalyzes the reversible reaction in which hydroxymethyl group from 5,10-methylenetetrahydrofolate is transferred onto alpha-ketoisovalerate to form ketopantoate. This is 3-methyl-2-oxobutanoate hydroxymethyltransferase from Rhodopseudomonas palustris (strain BisB5).